We begin with the raw amino-acid sequence, 237 residues long: Indole-3-glycerol phosphate synthase (237 aa).

The protein belongs to the TrpC family.

The enzyme catalyses 1-(2-carboxyphenylamino)-1-deoxy-D-ribulose 5-phosphate + H(+) = (1S,2R)-1-C-(indol-3-yl)glycerol 3-phosphate + CO2 + H2O. Its pathway is amino-acid biosynthesis; L-tryptophan biosynthesis; L-tryptophan from chorismate: step 4/5. In Thermoplasma volcanium (strain ATCC 51530 / DSM 4299 / JCM 9571 / NBRC 15438 / GSS1), this protein is Indole-3-glycerol phosphate synthase.